Here is a 321-residue protein sequence, read N- to C-terminus: Acetyl-coenzyme A carboxylase carboxyl transferase subunit beta, chloroplastic (321 aa).

Residues 47–321 (LWAQCDNCEN…FWFYVLRSSL (275 aa)) form the CoA carboxyltransferase N-terminal domain. Residues cysteine 51, cysteine 54, cysteine 70, and cysteine 73 each contribute to the Zn(2+) site. The C4-type zinc finger occupies 51–73 (CDNCENLLYLRFLRENQSVCKEC).

This sequence belongs to the AccD/PCCB family. As to quaternary structure, acetyl-CoA carboxylase is a heterohexamer composed of biotin carboxyl carrier protein, biotin carboxylase and 2 subunits each of ACCase subunit alpha and ACCase plastid-coded subunit beta (accD). The cofactor is Zn(2+).

The protein resides in the plastid. It is found in the chloroplast stroma. It catalyses the reaction N(6)-carboxybiotinyl-L-lysyl-[protein] + acetyl-CoA = N(6)-biotinyl-L-lysyl-[protein] + malonyl-CoA. It participates in lipid metabolism; malonyl-CoA biosynthesis; malonyl-CoA from acetyl-CoA: step 1/1. Functionally, component of the acetyl coenzyme A carboxylase (ACC) complex. Biotin carboxylase (BC) catalyzes the carboxylation of biotin on its carrier protein (BCCP) and then the CO(2) group is transferred by the transcarboxylase to acetyl-CoA to form malonyl-CoA. This chain is Acetyl-coenzyme A carboxylase carboxyl transferase subunit beta, chloroplastic, found in Pinus thunbergii (Japanese black pine).